We begin with the raw amino-acid sequence, 139 residues long: Protein archease (139 aa).

Ca(2+) is bound by residues aspartate 12, aspartate 138, and isoleucine 139.

This sequence belongs to the archease family.

In terms of biological role, activates the tRNA-splicing ligase complex by facilitating the enzymatic turnover of catalytic subunit RtcB. Acts by promoting the guanylylation of RtcB, a key intermediate step in tRNA ligation. Can also alter the NTP specificity of RtcB such that ATP, dGTP or ITP is used efficiently. In Sulfurisphaera tokodaii (strain DSM 16993 / JCM 10545 / NBRC 100140 / 7) (Sulfolobus tokodaii), this protein is Protein archease.